A 293-amino-acid chain; its full sequence is Large ribosomal subunit protein uL18 (293 aa).

Residues 249–273 form a disordered region; it reads DASPAAKKAAKPSKRHTAKRLTYDE. Residues 256–267 are compositionally biased toward basic residues; sequence KAAKPSKRHTAK.

It belongs to the universal ribosomal protein uL18 family. In terms of assembly, component of the large ribosomal subunit (LSU).

It localises to the cytoplasm. It is found in the nucleus. Functionally, component of the ribosome, a large ribonucleoprotein complex responsible for the synthesis of proteins in the cell. The small ribosomal subunit (SSU) binds messenger RNAs (mRNAs) and translates the encoded message by selecting cognate aminoacyl-transfer RNA (tRNA) molecules. The large subunit (LSU) contains the ribosomal catalytic site termed the peptidyl transferase center (PTC), which catalyzes the formation of peptide bonds, thereby polymerizing the amino acids delivered by tRNAs into a polypeptide chain. The nascent polypeptides leave the ribosome through a tunnel in the LSU and interact with protein factors that function in enzymatic processing, targeting, and the membrane insertion of nascent chains at the exit of the ribosomal tunnel. The sequence is that of Large ribosomal subunit protein uL18 (rpl-5) from Caenorhabditis elegans.